The following is a 600-amino-acid chain: Transcription factor rlmA (600 aa).

Residues 1–61 enclose the MADS-box domain; that stretch reads MGRRKIEIKA…KKLYEFSSCD (61 aa). Disordered regions lie at residues 71 to 518 and 544 to 600; these read YYGP…NIET and GFGR…KSKT. Positions 75–89 are enriched in basic and acidic residues; it reads PHEHKGPEDFNGKRD. A compositionally biased stretch (polar residues) spans 151-160; it reads PQPQGASRPS. A compositionally biased stretch (pro residues) spans 222-242; that stretch reads QPLPPHAIPPHPMPQPVPPHH. Positions 243–260 are enriched in low complexity; it reads QAPQHLPQHPHPLAQQTP. The segment covering 328–339 has biased composition (polar residues); it reads HQRSLSSKSRSI. A compositionally biased stretch (basic and acidic residues) spans 364-384; the sequence is PRTESADVKAEAKQNDSKEIK. Residues 386-397 are compositionally biased toward pro residues; that stretch reads PAQPVAPPPPPR. The segment covering 440–452 has biased composition (low complexity); it reads RGSATADSSSSTG. Residues 453–468 are compositionally biased toward polar residues; the sequence is NQTVTPAKANPDTNHS. Positions 490 to 501 are enriched in pro residues; sequence PPNPFARPPPPG. A compositionally biased stretch (low complexity) spans 503–515; that stretch reads ASQNSNAYNSNNN.

This sequence belongs to the MEF2 family. As to quaternary structure, interacts with hsp90. Phosphorylation during asexual development.

Its subcellular location is the nucleus. Transcription factor; part of cell wall integrity (CWI) signaling pathway composed of pkcA, the bck1-mkk2-mpka MAPK cascade and the downstream rlmA transcription regulator. The CWI signaling pathway regulates cell wall integrity and pyomelanin formation. CWI also controls oxidative stress response, gliotoxin production, iron adaptation and asexual development. Finally, CWI is constitutively required for A.fumigatus to cope with the temperature increase found in the mammalian lung environment, during infection. Positively regulates the phosphorylation of mpkA. Involved in tolerance to oxidative damage and transcriptional regulation of genes related to oxidative stress adaptation. Directly regulates the expression of regulators of conidiation, including flbB, flbC, brlA, abaA, and rasB, as well as genes involved in cell wall synthesis and remodeling. Specifically associates with the target fumiquinazoline (fmq) cluster genes promoters at conserved motifs (5'-TAWWWWTA-3') during conidiation to supplement mature conidia with fumiquinazoline C. Also controls the DHN-melanin production via binding the promoter of pksP. This is Transcription factor rlmA from Aspergillus fumigatus (strain ATCC MYA-4609 / CBS 101355 / FGSC A1100 / Af293) (Neosartorya fumigata).